The chain runs to 503 residues: Inosine-5'-monophosphate dehydrogenase (503 aa).

2 residues coordinate K(+): Gly-20 and Ser-22. CBS domains are found at residues 103–163 (FVVS…ETKV) and 167–228 (MTPF…LVDS). 261–263 (DSS) is an NAD(+) binding site. The K(+) site is built by Asp-264, Phe-266, Gly-314, and Gly-316. 312-314 (GIG) is an NAD(+) binding site. Ser-317 is a binding site for IMP. Cys-319 contributes to the K(+) binding site. Catalysis depends on Cys-319, which acts as the Thioimidate intermediate. IMP-binding positions include 358–360 (DGG), 381–382 (GR), and 405–409 (YWGEG). Residue Arg-418 is the Proton acceptor of the active site. Glu-431 is an IMP binding site. K(+) is bound by residues Asn-460, Glu-485, Gly-486, and Gly-487.

Belongs to the IMPDH/GMPR family. As to quaternary structure, homotetramer. K(+) is required as a cofactor.

The protein localises to the cytoplasm. It carries out the reaction IMP + NAD(+) + H2O = XMP + NADH + H(+). It participates in purine metabolism; XMP biosynthesis via de novo pathway; XMP from IMP: step 1/1. Its activity is regulated as follows. Mycophenolic acid (MPA) is a non-competitive inhibitor that prevents formation of the closed enzyme conformation by binding to the same site as the amobile flap. In contrast, mizoribine monophosphate (MZP) is a competitive inhibitor that induces the closed conformation. MPA is a potent inhibitor of mammalian IMPDHs but a poor inhibitor of the bacterial enzymes. MZP is a more potent inhibitor of bacterial IMPDH. Its function is as follows. Catalyzes the conversion of inosine 5'-phosphate (IMP) to xanthosine 5'-phosphate (XMP), the first committed and rate-limiting step in the de novo synthesis of guanine nucleotides, and therefore plays an important role in the regulation of cell growth. Could also have a single-stranded nucleic acid-binding activity and could play a role in RNA and/or DNA metabolism. The sequence is that of Inosine-5'-monophosphate dehydrogenase from Tritrichomonas foetus (Trichomonas foetus).